Consider the following 531-residue polypeptide: Cytochrome P450 monooxygenase ffsD (531 aa).

A helical membrane pass occupies residues 40–60; it reads VGALLGISLSVVLLLWVISVV. Cys475 serves as a coordination point for heme.

Belongs to the cytochrome P450 family. Heme serves as cofactor.

The protein localises to the membrane. Its pathway is mycotoxin biosynthesis. Its function is as follows. Cytochrome P450 monooxygenase; part of the gene cluster that mediates the biosynthesis of the cytotoxic leucine-containing cytochalasans, including aspochalasin C, aspochalasin E, TMC-169, flavichalasine F, aspergillin PZ, aspochalasin M and flavichalasine G. The first step in the pathway is catalyzed by the hybrid PKS-NRPS ffsA that utilizes 8 units of malonyl-CoA to iteratively assemble the octaketide chain before addition of L-leucine by the C-terminal NRPS modules. Because ffsA lacks a designated enoylreductase (ER) domain, the required activity is provided the enoyl reductase fssC. The methyltransferase (MT) domain of ffsA catalyzes the alpha-methylation at C10 and C14 using S-adenosyl-L-methionine as the methyl-donating cosubstrate. Reduction by the hydrolyase ffsE, followed by dehydration and intra-molecular Diels-Alder cyclization by the Diels-Alderase ffsF then yield the required isoindolone-fused macrocycle. A number of oxidative steps catalyzed by the tailoring cytochrome P450 monooxygenase ffsD, the FAD-linked oxidoreductase ffsJ and the short-chain dehydrogenase/reductase ffsI, are further required to afford the final products. The polypeptide is Cytochrome P450 monooxygenase ffsD (Aspergillus flavipes).